The sequence spans 564 residues: Aspyridones efflux protein (564 aa).

Low complexity predominate over residues 1–17 (MHPDQADTAAMQQQTTT). Residues 1–49 (MHPDQADTAAMQQQTTTECSDRSRPEKAEEGHAREHTVTRTCSREPEQT) are disordered. The segment covering 19 to 47 (CSDRSRPEKAEEGHAREHTVTRTCSREPE) has biased composition (basic and acidic residues). 10 consecutive transmembrane segments (helical) span residues 66-86 (AICLTIFLISVDFSILATAIP), 127-147 (WTFLLALLTFEVGSIICATAP), 158-178 (IAGCGNAGLLSGALLILTHSV), 185-205 (LFMAMTGGTYGVAAIAGPPLG), 216-236 (WCFWINLPIGALTFLVIVFLF), 260-280 (VGTLMFMPAIICVLLALQWGG), 287-307 (SGIVVALLVVGGVLVIAFGIV), 335-355 (FALGAAFFVFIYFLPIWFQGV), 368-388 (LPMLVGNIVATAVSGVLVTII), and 392-412 (APFMILGTILASVGAGLLLLF). Residue Asn-415 is glycosylated (N-linked (GlcNAc...) asparagine). A run of 2 helical transmembrane segments spans residues 416–436 (VTAASWIGYQAIVGLGIGFGW) and 454–474 (IATATLSFAQTLGGTLFVSVA). A glycan (N-linked (GlcNAc...) asparagine) is linked at Asn-524. Residues 528–548 (LSAFFVATIMAIMSLVGCTFV) traverse the membrane as a helical segment.

Belongs to the major facilitator superfamily. TCR/Tet family.

It is found in the cell membrane. Its function is as follows. Efflux pump that may be involved in the secretion of leporins. The sequence is that of Aspyridones efflux protein (TP) from Neocamarosporium betae (Beet black rot fungus).